We begin with the raw amino-acid sequence, 893 residues long: MGISFSIPFDPCVNKVSQWLDMKGSYTHNLEKNLVALETTMEELKAKRDDLLRRLKREEDRGLQRLSEFQVWLNRVATVEDIIITLLRDRDVEIQRLCLCRFCSKNLTTSYRYGKSVFLRLREVEKLKGEVFGVITEQASTSAFEERPLQPTIVGQKKMLDKAWKHLMEDGTGIMGMYGMGGVGKTTLLTQLFNMFNKDKCGFDIGIWVVVSQEVNVEKIQDEIAQKLGLGGHEWTQRDISQKGVHLFNFLKNKKFVLFLDDLWDKVELANIGVPDPRTQKGCKLAFTSRSLNVCTSMGDEEPMEVQCLEENVAFDLFQKKVGQKTLGSDPGIPQLARIVAKKCCGLPLALNVIGETMSCKRTIQEWRNAIHVLNSYAAEFIGMEDKILPLLKYSYDNLKGEHVKSSLLYCALYPEDAKIRKEDLIEHWICEEIIDGSEGIEKAEDKGYDIIGSLVRASLLMECVDLKGKSSVIMHDVVREMALWIASELGIQKEAFIVRAGVGVREIPKVKNWNVVRRMSLMGNKIHHLVGSYECMELTTLLLGEGEYGSIWRWSEIKTISSEFFNCMPKLAVLDLSHNQSLFELPEEISNLVSLKYLNLSHTGIRHLSKGIQELKKIIHLNLEHTSKLESIDGISSLHNLKVLKLYGSRLPWDLNTVKELETLEHLEILTTTIDPRAKQFLSSHRLMSRSRLLQIFGSNIFSPDRQLESLSVSTDKLREFEIMCCSISEIKMGGICNFLSLVDVTIYNCEGLRELTFLIFAPKLRSLSVVDAKDLEDIINEEKACEGEDSGIVPFPELKYLNLDDLPKLKNIYRRPLPFLCLEKITIGECPNLRKLPLDSRSGKQGENGCIIHYKDSRWLKGVKWADEATKKRFLPSCEHRLERCETIFED.

Residues 24–68 (GSYTHNLEKNLVALETTMEELKAKRDDLLRRLKREEDRGLQRLSE) are a coiled coil. The NB-ARC domain occupies 136–440 (TEQASTSAFE…CEEIIDGSEG (305 aa)). 179–186 (GMGGVGKT) contacts ATP. LRR repeat units follow at residues 516 to 537 (VVRR…YECM), 538 to 559 (ELTT…SEIK), 571 to 593 (KLAV…ISNL), 595 to 617 (SLKY…QELK), 618 to 640 (KIIH…SSLH), and 641 to 663 (NLKV…KELE).

Belongs to the disease resistance NB-LRR family.

Its function is as follows. Probable disease resistance protein. This chain is Probable disease resistance protein At1g62630, found in Arabidopsis thaliana (Mouse-ear cress).